The chain runs to 977 residues: Vacuolar membrane protease (977 aa).

Residues 1-17 (MARSRTAGRCNPFAFYR) are Cytoplasmic-facing. Residues 18 to 38 (VPVTVFVTLIYVALLAPIIVV) form a helical membrane-spanning segment. Over 39 to 383 (HHILPAVPES…AFAVFEIHTL (345 aa)) the chain is Vacuolar. N-linked (GlcNAc...) asparagine glycosylation is found at Asn-113 and Asn-116. Zn(2+)-binding residues include His-166 and Asp-178. The Proton acceptor role is filled by Glu-212. Positions 213, 238, and 311 each coordinate Zn(2+). Residues 384 to 404 (FALSVTLLIVGPLTLFITSII) traverse the membrane as a helical segment. The Cytoplasmic portion of the chain corresponds to 405–438 (LANQDRMYLFGISVPVDDGFGSVPLRGWRGFFRF). A helical transmembrane segment spans residues 439–459 (PFIFGSTTASVVALAYLMAKI). Residues 460 to 469 (NPMIAHSSEY) lie on the Vacuolar side of the membrane. Residues 470–490 (AVWSMMISAWVFVAWFLSRIA) traverse the membrane as a helical segment. Over 491–500 (NFARPSALHR) the chain is Cytoplasmic. Residues 501–521 (IYVLTWMFLLTWVLLVITTVY) traverse the membrane as a helical segment. The Vacuolar portion of the chain corresponds to 522 to 525 (ENRD). Residues 526–546 (GIASGYFVIFYAFGTFMATWI) form a helical membrane-spanning segment. Residues 547–659 (SYLELFSLPK…WSANLPKWTW (113 aa)) lie on the Cytoplasmic side of the membrane. Positions 566–576 (GQISSRPTSLG) are enriched in polar residues. A disordered region spans residues 566 to 604 (GQISSRPTSLGGSRLLTPSGESVGQHPEDEEPTESTSLL). Residues 660–680 (ILQFLLIAPIVIILIGQLGLL) form a helical membrane-spanning segment. Over 681–696 (ITSAIHQTMQDGSSTL) the chain is Vacuolar. The chain crosses the membrane as a helical span at residues 697-717 (VPYLIIALLTTFLFMPTLPFI). Residues 718–726 (HRYTYHIPT) lie on the Cytoplasmic side of the membrane. A helical membrane pass occupies residues 727-747 (FLFLIFVATLVYNLVAFPFSG). Residues 748–977 (NNRTKLFFLQ…LVKGSRSFEV (230 aa)) are Vacuolar-facing. 2 N-linked (GlcNAc...) asparagine glycosylation sites follow: Asn-749 and Asn-791.

The protein belongs to the peptidase M28 family. Requires Zn(2+) as cofactor.

Its subcellular location is the vacuole membrane. May be involved in vacuolar sorting and osmoregulation. In Talaromyces marneffei (strain ATCC 18224 / CBS 334.59 / QM 7333) (Penicillium marneffei), this protein is Vacuolar membrane protease.